Here is a 324-residue protein sequence, read N- to C-terminus: O-ureido-L-serine synthase (324 aa).

Lys43 is subject to N6-(pyridoxal phosphate)lysine. Pyridoxal 5'-phosphate contacts are provided by residues Asn73, 177–181 (GTTGT), and Ser265.

This sequence belongs to the cysteine synthase/cystathionine beta-synthase family. In terms of assembly, homotetramer. Requires pyridoxal 5'-phosphate as cofactor.

The catalysed reaction is hydroxyurea + O-acetyl-L-serine = O-ureido-L-serine + acetate + H(+). It catalyses the reaction O-acetyl-L-serine + hydrogen sulfide = L-cysteine + acetate. Functionally, involved in the biosynthesis of the antibiotic D-cycloserine (DCS), a cyclic structural analog of D-alanine, used as an antitubercular agent. Catalyzes the addition of hydroxyurea on O-acetyl-L-serine (OAS) to yield O-ureido-L-serine. It prefers sulfide as the second substrate, followed by hydroxyurea, L-homocysteine, and thiosulfate. In Streptomyces lavendulae, this protein is O-ureido-L-serine synthase.